A 243-amino-acid chain; its full sequence is 2,3-bisphosphoglycerate-dependent phosphoglycerate mutase (243 aa).

Substrate is bound by residues 8–15, 21–22, arginine 60, 87–90, lysine 98, 114–115, and 183–184; these read RHGQSEWN, TG, ERHY, RR, and GN. Residue histidine 9 is the Tele-phosphohistidine intermediate of the active site. Glutamate 87 (proton donor/acceptor) is an active-site residue.

It belongs to the phosphoglycerate mutase family. BPG-dependent PGAM subfamily.

It catalyses the reaction (2R)-2-phosphoglycerate = (2R)-3-phosphoglycerate. It functions in the pathway carbohydrate degradation; glycolysis; pyruvate from D-glyceraldehyde 3-phosphate: step 3/5. In terms of biological role, catalyzes the interconversion of 2-phosphoglycerate and 3-phosphoglycerate. The protein is 2,3-bisphosphoglycerate-dependent phosphoglycerate mutase of Clostridium acetobutylicum (strain ATCC 824 / DSM 792 / JCM 1419 / IAM 19013 / LMG 5710 / NBRC 13948 / NRRL B-527 / VKM B-1787 / 2291 / W).